The sequence spans 362 residues: Probable aromatic amino acid hydroxylase (362 aa).

Fe cation is bound by residues His-200 and His-205.

This sequence belongs to the biopterin-dependent aromatic amino acid hydroxylase family. Fe(2+) is required as a cofactor.

The sequence is that of Probable aromatic amino acid hydroxylase from Chlamydia pneumoniae (Chlamydophila pneumoniae).